The primary structure comprises 346 residues: Acetylpolyamine amidohydrolase 1 (346 aa).

Histidine 161 acts as the Proton donor/acceptor in catalysis. Residues aspartate 197, histidine 199, and aspartate 286 each coordinate Zn(2+).

It belongs to the histone deacetylase family. Homodimer. The cofactor is Zn(2+).

It catalyses the reaction N-acetylputrescine + H2O = putrescine + acetate. The catalysed reaction is N-acetylcadaverine + H2O = cadaverine + acetate. The enzyme catalyses N(1)-acetylspermine + H2O = spermine + acetate. It carries out the reaction N(1)-acetylspermidine + H2O = spermidine + acetate. It participates in amine and polyamine metabolism. Functionally, catalyzes the deacetylation of acetylated polyamines such as N-acetylputrescine, N-acetylcadaverine, N(1)-acetylspermine and N(1)-acetylspermidine. Plays an important role in the metabolism of acetylated polyamines in P.aeruginosa. Is involved in the degradation pathways of N-acetylputrescine and N-acetylcadaverine, that allow P.aeruginosa to utilize these acetylpolyamines as a carbon source under glucose starvation. In vitro, can also hydrolyze artificial trifluoroacetylated and acetylated lysine-derivatives. The protein is Acetylpolyamine amidohydrolase 1 of Pseudomonas aeruginosa (strain ATCC 15692 / DSM 22644 / CIP 104116 / JCM 14847 / LMG 12228 / 1C / PRS 101 / PAO1).